Consider the following 124-residue polypeptide: Cysteine-rich DPF motif domain-containing protein 1 (124 aa).

The interval 105–124 (MDKRKPQSKCLTRKKKDSRT) is disordered. A compositionally biased stretch (basic residues) spans 115 to 124 (LTRKKKDSRT).

Belongs to the CDPF1 family.

This is Cysteine-rich DPF motif domain-containing protein 1 (CDPF1) from Gallus gallus (Chicken).